We begin with the raw amino-acid sequence, 863 residues long: Desmocollin-2 (863 aa).

The propeptide occupies 1 to 89 (KFIGRVNLKE…QEKVLRRAKR (89 aa)). Cadherin domains lie at 90–197 (RWAP…APIF), 198–309 (TETS…LPTF), 310–423 (TRSS…GPEC), 424–528 (DPRV…VIPQ), and 529–644 (RTVV…ILGK). Topologically, residues 90–644 (RWAPIPCSVP…TGNREVILGK (555 aa)) are extracellular. Residue asparagine 120 is glycosylated (N-linked (GlcNAc...) asparagine). Residues asparagine 346, asparagine 495, and asparagine 579 are each glycosylated (N-linked (GlcNAc...) asparagine). The helical transmembrane segment at 645–665 (WAILAILLGIALLFCILFTLV) threads the bilayer. The Cytoplasmic portion of the chain corresponds to 666-863 (CGATTGADKK…RTLAETCMKR (198 aa)). Phosphoserine occurs at positions 826, 830, and 835.

Interacts with DSP, PKP2 and JUP. Interacts with DSG3; the interaction may limit the interaction of DSC3 with p38MAPK family members and therefore repress p38MAPK signaling activation. Expressed in esophagus and rumen. Weakly expressed in epithelia and cardiac muscle.

Its subcellular location is the cell membrane. The protein localises to the cell junction. It localises to the desmosome. Its function is as follows. A component of desmosome cell-cell junctions which are required for positive regulation of cellular adhesion. Promotes timely incorporation of DSG2 into desmosome intercellular junctions and promotes interaction of desmosome cell junctions with intermediate filament cytokeratin, via modulation of DSP phosphorylation. Plays an important role in desmosome-mediated maintenance of intestinal epithelial cell intercellular adhesion strength and barrier function. Positively regulates wound healing of intestinal mucosa via promotion of epithelial cell migration, and also plays a role in mechanotransduction of force between intestinal epithelial cells and extracellular matrix. May contribute to epidermal cell positioning (stratification) by mediating differential adhesiveness between cells that express different isoforms. In Bos taurus (Bovine), this protein is Desmocollin-2 (DSC2).